The primary structure comprises 660 residues: Bifunctional polymyxin resistance protein ArnA (660 aa).

The segment at 1–304 (MKTVVFAYHD…TLGLVQGSRL (304 aa)) is formyltransferase ArnAFT. 86–88 (HLI) is a (6R)-10-formyltetrahydrofolate binding site. His104 serves as the catalytic Proton donor; for formyltransferase activity. Residues Arg114 and 136 to 140 (VKRAD) contribute to the (6R)-10-formyltetrahydrofolate site. The dehydrogenase ArnADH stretch occupies residues 314–660 (RRTRVLILGV…RTVDLTDKPS (347 aa)). Residues Asp347 and 368 to 369 (DI) each bind NAD(+). Residues Ala393, Tyr398, and 432–433 (TS) each bind UDP-alpha-D-glucuronate. Glu434 (proton acceptor; for decarboxylase activity) is an active-site residue. Residues Arg460, Asn492, 526–535 (KLIDGGKQKR), and Tyr613 each bind UDP-alpha-D-glucuronate. Arg619 (proton donor; for decarboxylase activity) is an active-site residue.

This sequence in the N-terminal section; belongs to the Fmt family. UDP-L-Ara4N formyltransferase subfamily. In the C-terminal section; belongs to the NAD(P)-dependent epimerase/dehydratase family. UDP-glucuronic acid decarboxylase subfamily. Homohexamer, formed by a dimer of trimers.

It catalyses the reaction UDP-alpha-D-glucuronate + NAD(+) = UDP-beta-L-threo-pentopyranos-4-ulose + CO2 + NADH. The catalysed reaction is UDP-4-amino-4-deoxy-beta-L-arabinose + (6R)-10-formyltetrahydrofolate = UDP-4-deoxy-4-formamido-beta-L-arabinose + (6S)-5,6,7,8-tetrahydrofolate + H(+). It participates in nucleotide-sugar biosynthesis; UDP-4-deoxy-4-formamido-beta-L-arabinose biosynthesis; UDP-4-deoxy-4-formamido-beta-L-arabinose from UDP-alpha-D-glucuronate: step 1/3. It functions in the pathway nucleotide-sugar biosynthesis; UDP-4-deoxy-4-formamido-beta-L-arabinose biosynthesis; UDP-4-deoxy-4-formamido-beta-L-arabinose from UDP-alpha-D-glucuronate: step 3/3. Its pathway is bacterial outer membrane biogenesis; lipopolysaccharide biosynthesis. Its function is as follows. Bifunctional enzyme that catalyzes the oxidative decarboxylation of UDP-glucuronic acid (UDP-GlcUA) to UDP-4-keto-arabinose (UDP-Ara4O) and the addition of a formyl group to UDP-4-amino-4-deoxy-L-arabinose (UDP-L-Ara4N) to form UDP-L-4-formamido-arabinose (UDP-L-Ara4FN). The modified arabinose is attached to lipid A and is required for resistance to polymyxin and cationic antimicrobial peptides. In Escherichia coli O9:H4 (strain HS), this protein is Bifunctional polymyxin resistance protein ArnA.